Consider the following 535-residue polypeptide: CTP synthase (535 aa).

The segment at 1–267 (MTKFIFVTGG…DDIVIQRLQL (267 aa)) is amidoligase domain. Residue S13 coordinates CTP. Residue S13 coordinates UTP. Residue 14–19 (SLGKGI) participates in ATP binding. An L-glutamine-binding site is contributed by Y54. D71 lines the ATP pocket. Mg(2+) contacts are provided by D71 and E141. Residues 148-150 (DIE), 188-193 (KTKPTQ), and K224 contribute to the CTP site. Residues 188–193 (KTKPTQ) and K224 contribute to the UTP site. Residue 240–242 (RDA) coordinates ATP. Residues 293-535 (TIGLVGKYVS…VEAALNYQQK (243 aa)) enclose the Glutamine amidotransferase type-1 domain. G355 is an L-glutamine binding site. The Nucleophile; for glutamine hydrolysis role is filled by C382. Residues 383–386 (LGMQ), E406, and R463 contribute to the L-glutamine site. Active-site residues include H508 and E510.

Belongs to the CTP synthase family. In terms of assembly, homotetramer.

It carries out the reaction UTP + L-glutamine + ATP + H2O = CTP + L-glutamate + ADP + phosphate + 2 H(+). The enzyme catalyses L-glutamine + H2O = L-glutamate + NH4(+). The catalysed reaction is UTP + NH4(+) + ATP = CTP + ADP + phosphate + 2 H(+). Its pathway is pyrimidine metabolism; CTP biosynthesis via de novo pathway; CTP from UDP: step 2/2. Allosterically activated by GTP, when glutamine is the substrate; GTP has no effect on the reaction when ammonia is the substrate. The allosteric effector GTP functions by stabilizing the protein conformation that binds the tetrahedral intermediate(s) formed during glutamine hydrolysis. Inhibited by the product CTP, via allosteric rather than competitive inhibition. Its function is as follows. Catalyzes the ATP-dependent amination of UTP to CTP with either L-glutamine or ammonia as the source of nitrogen. Regulates intracellular CTP levels through interactions with the four ribonucleotide triphosphates. The chain is CTP synthase from Staphylococcus epidermidis (strain ATCC 35984 / DSM 28319 / BCRC 17069 / CCUG 31568 / BM 3577 / RP62A).